We begin with the raw amino-acid sequence, 414 residues long: Patatin-like protein 1 (414 aa).

The 207-residue stretch at 22–228 (LSLDGGGVRG…TANNPTLVAM (207 aa)) folds into the PNPLA domain. The GXGXXG motif lies at 26-31 (GGGVRG). Residues 64 to 68 (GTSTG) carry the GXSXG motif. The active-site Nucleophile is serine 66. The active-site Proton acceptor is aspartate 215. The DGA/G motif lies at 215 to 217 (DGA). Serine 399 is modified (phosphoserine).

It belongs to the patatin family. Post-translationally, phosphorylated at Ser-399 by CPK3. Phosphorylation enhances PLP1 activity towards phosphatidylcholine. Expressed specifically in roots and root hairs.

The protein resides in the cytoplasm. Possesses non-specific lipolytic acyl hydrolase (LAH) activity. Catalyzes the hydrolysis of the neutral lipids monogalactosyldiacylglycerol (MGDG), digalactosyldiacylglycerol (DGDG) and phosphatidylglycerol (PG), and less efficiently the polar lipids phosphatidylcholine (PC) and phosphatidylinositol (PI), but not the storage lipid triacylglycerol (TAG). May play a role in root development. This chain is Patatin-like protein 1 (PLP1), found in Arabidopsis thaliana (Mouse-ear cress).